Reading from the N-terminus, the 148-residue chain is Ubiquitin-conjugating enzyme E2 8 (148 aa).

In terms of domain architecture, UBC core spans 1–147; the sequence is MASKRILKEL…ARNWTQKYAM (147 aa). Residue Cys-85 is the Glycyl thioester intermediate of the active site.

It belongs to the ubiquitin-conjugating enzyme family. Interacts with CIP8, CHIP, NLA and XERICO. As to expression, highest expression in young stems, old leaves. Lowest levels in floral buds, anthers and young leaves.

It catalyses the reaction S-ubiquitinyl-[E1 ubiquitin-activating enzyme]-L-cysteine + [E2 ubiquitin-conjugating enzyme]-L-cysteine = [E1 ubiquitin-activating enzyme]-L-cysteine + S-ubiquitinyl-[E2 ubiquitin-conjugating enzyme]-L-cysteine.. It functions in the pathway protein modification; protein ubiquitination. Functionally, accepts the ubiquitin from the E1 complex and catalyzes its covalent attachment to other proteins. Mediates the selective degradation of short-lived and abnormal proteins. The protein is Ubiquitin-conjugating enzyme E2 8 (UBC8) of Arabidopsis thaliana (Mouse-ear cress).